A 596-amino-acid polypeptide reads, in one-letter code: Putative terpenoid synthase 5 (596 aa).

Mg(2+)-binding residues include aspartate 349, aspartate 353, asparagine 481, and aspartate 489. Positions 349-353 match the DDXXD motif motif; that stretch reads DDTCD.

This sequence belongs to the terpene synthase family. Tpsa subfamily. The cofactor is Mg(2+). Mn(2+) serves as cofactor.

It localises to the cytoplasm. The protein operates within secondary metabolite biosynthesis; terpenoid biosynthesis. This is Putative terpenoid synthase 5 (TPS05) from Arabidopsis thaliana (Mouse-ear cress).